Consider the following 349-residue polypeptide: Lipoyl synthase (349 aa).

Residues cysteine 55, cysteine 60, cysteine 66, cysteine 81, cysteine 85, cysteine 88, and serine 292 each contribute to the [4Fe-4S] cluster site. The 215-residue stretch at tryptophan 67 to lysine 281 folds into the Radical SAM core domain. Residues leucine 321–arginine 349 are disordered.

This sequence belongs to the radical SAM superfamily. Lipoyl synthase family. [4Fe-4S] cluster is required as a cofactor.

The protein localises to the cytoplasm. It catalyses the reaction [[Fe-S] cluster scaffold protein carrying a second [4Fe-4S](2+) cluster] + N(6)-octanoyl-L-lysyl-[protein] + 2 oxidized [2Fe-2S]-[ferredoxin] + 2 S-adenosyl-L-methionine + 4 H(+) = [[Fe-S] cluster scaffold protein] + N(6)-[(R)-dihydrolipoyl]-L-lysyl-[protein] + 4 Fe(3+) + 2 hydrogen sulfide + 2 5'-deoxyadenosine + 2 L-methionine + 2 reduced [2Fe-2S]-[ferredoxin]. Its pathway is protein modification; protein lipoylation via endogenous pathway; protein N(6)-(lipoyl)lysine from octanoyl-[acyl-carrier-protein]: step 2/2. Functionally, catalyzes the radical-mediated insertion of two sulfur atoms into the C-6 and C-8 positions of the octanoyl moiety bound to the lipoyl domains of lipoate-dependent enzymes, thereby converting the octanoylated domains into lipoylated derivatives. This chain is Lipoyl synthase, found in Corynebacterium jeikeium (strain K411).